Reading from the N-terminus, the 327-residue chain is Carboxylesterase 20 (327 aa).

The short motif at 87–89 (HGG) is the Involved in the stabilization of the negatively charged intermediate by the formation of the oxyanion hole element. The active-site Nucleophile is Ser166. Catalysis depends on residues Asp272 and His302.

The protein belongs to the 'GDXG' lipolytic enzyme family. Expressed in roots, stems, flowers and siliques.

It catalyses the reaction a carboxylic ester + H2O = an alcohol + a carboxylate + H(+). Its activity is regulated as follows. Esterase activity measured in vitro with the synthetic substrate p-nitrophenyl acetate (pNPA) is inhibited by strigolactone. Functionally, carboxylesterase that possesses esterase activity in vitro with the synthetic substrate p-nitrophenyl acetate (pNPA). Binds strigolactones, but is not able to hydrolyze them. May be involved in the regulation of shoot branching. This chain is Carboxylesterase 20, found in Arabidopsis thaliana (Mouse-ear cress).